We begin with the raw amino-acid sequence, 154 residues long: uncharacterized protein (154 aa).

The protein localises to the mitochondrion. This is an uncharacterized protein from Vicia faba (Broad bean).